We begin with the raw amino-acid sequence, 1173 residues long: Calcium-transporting ATPase 2 (1173 aa).

Positions 1-24 (MSRQDENSALLANNENNKPSYTGN) are disordered. The Cytoplasmic segment spans residues 1–114 (MSRQDENSAL…LQLVWAAFND (114 aa)). The segment covering 7–17 (NSALLANNENN) has biased composition (low complexity). Residues 115–139 (KTMQLLTVAAVVSFVLGLYELWMQP) traverse the membrane as a helical segment. Residues 140 to 152 (PQYDPEGNKIKQV) lie on the Vacuolar side of the membrane. Residues 153 to 173 (DWIEGVAIMIAVFVVVLVSAA) traverse the membrane as a helical segment. Residues 174 to 349 (NDYQKELQFA…LADNISVYGC (176 aa)) are Cytoplasmic-facing. A helical transmembrane segment spans residues 350–368 (VSAIILFLVLFTRYLFYII). Residues 369–388 (PEDGRFHDLDPAQKGSKFMN) lie on the Vacuolar side of the membrane. A helical transmembrane segment spans residues 389 to 409 (IFITSITVIVVAVPEGLPLAV). Residues valine 398 and glutamate 403 each coordinate Ca(2+). The Cytoplasmic segment spans residues 410–899 (TLALAFATTR…RCVSVSIKKF (490 aa)). Aspartate 445 serves as the catalytic 4-aspartylphosphate intermediate. Mg(2+)-binding residues include aspartate 445 and threonine 447. ATP contacts are provided by residues threonine 447, lysine 643, 762-764 (TGD), arginine 816, and lysine 822. A Mg(2+)-binding site is contributed by aspartate 841. Asparagine 844 provides a ligand contact to ATP. A helical membrane pass occupies residues 900–922 (IQFQLIVNITAVILTFVSSVASS). Asparagine 907 provides a ligand contact to Ca(2+). At 923–929 (DETSVLT) the chain is on the vacuolar side. The helical transmembrane segment at 930 to 950 (AVQLLWINLIMDTLAALALAT) threads the bilayer. Ca(2+) contacts are provided by asparagine 937 and aspartate 941. The Cytoplasmic portion of the chain corresponds to 951 to 976 (DKPDPNIMDRKPRGRSTSLISVSTWK). Residues 977 to 998 (MILSQATLQLIVTFILHFYGPE) form a helical membrane-spanning segment. Residues 999–1010 (LFFKKHEDEITS) lie on the Vacuolar side of the membrane. The chain crosses the membrane as a helical span at residues 1011-1029 (HQQQQLNAMTFNTFVWLQF). Residues 1030–1065 (FTMLVSRKLDEGDGISNWRGRISAANLNFFQDLGRN) are Cytoplasmic-facing. A helical transmembrane segment spans residues 1066–1086 (YYFLTIMAIIGSCQVLIMFFG). Topologically, residues 1087 to 1099 (GAPFSIARQTKSM) are vacuolar. A helical membrane pass occupies residues 1100 to 1120 (WITAVLCGMLSLIMGVLVRIC). Residues 1121-1173 (PDEVAVKVFPAAFVQRFKYVFGLEFLRKNHTGKHDDEEALLEESDSPESTAFY) lie on the Cytoplasmic side of the membrane.

Belongs to the cation transport ATPase (P-type) (TC 3.A.3) family.

It is found in the vacuole membrane. It carries out the reaction Ca(2+)(in) + ATP + H2O = Ca(2+)(out) + ADP + phosphate + H(+). In terms of biological role, this magnesium-dependent enzyme catalyzes the hydrolysis of ATP coupled with the transport of calcium. Transports the calcium to the vacuole and participates in the control of the cytosolic free calcium. The polypeptide is Calcium-transporting ATPase 2 (PMC1) (Saccharomyces cerevisiae (strain ATCC 204508 / S288c) (Baker's yeast)).